Consider the following 417-residue polypeptide: Serine hydroxymethyltransferase (417 aa).

(6S)-5,6,7,8-tetrahydrofolate-binding positions include leucine 122 and 126–128 (GHL). Lysine 230 carries the post-translational modification N6-(pyridoxal phosphate)lysine. 355–357 (SPF) contacts (6S)-5,6,7,8-tetrahydrofolate.

The protein belongs to the SHMT family. In terms of assembly, homodimer. Requires pyridoxal 5'-phosphate as cofactor.

Its subcellular location is the cytoplasm. It carries out the reaction (6R)-5,10-methylene-5,6,7,8-tetrahydrofolate + glycine + H2O = (6S)-5,6,7,8-tetrahydrofolate + L-serine. It functions in the pathway one-carbon metabolism; tetrahydrofolate interconversion. Its pathway is amino-acid biosynthesis; glycine biosynthesis; glycine from L-serine: step 1/1. Catalyzes the reversible interconversion of serine and glycine with tetrahydrofolate (THF) serving as the one-carbon carrier. This reaction serves as the major source of one-carbon groups required for the biosynthesis of purines, thymidylate, methionine, and other important biomolecules. Also exhibits THF-independent aldolase activity toward beta-hydroxyamino acids, producing glycine and aldehydes, via a retro-aldol mechanism. The protein is Serine hydroxymethyltransferase of Francisella tularensis subsp. tularensis (strain FSC 198).